The chain runs to 684 residues: TBC1 domain family member 23 (684 aa).

A Rab-GAP TBC domain is found at 44–225; it reads PLPADLRAKV…AIWDGYLQQA (182 aa). Ser-300 is subject to Phosphoserine. The Rhodanese domain occupies 334–446; sequence EGVRFFVVDC…LQQHLADINV (113 aa). The span at 459 to 479 shows a compositional bias: polar residues; the sequence is STSGSRSSINSVDGESPNGSS. A disordered region spans residues 459-482; that stretch reads STSGSRSSINSVDGESPNGSSDRG. Residues Ser-469, Ser-474, and Ser-507 each carry the phosphoserine modification. Thr-514 carries the post-translational modification Phosphothreonine. The tract at residues 514-558 is may mediate the interaction with C17orf75, FAM91A1 and WDR11; the sequence is TPVDRHVSSSDRVGKPYRGVKPVFSIGDEEEYDTDEIDSSSMSDD. The interval 514-684 is may mediate the interaction with WASHC1; it reads TPVDRHVSSS…IMKVLDALES (171 aa). A Phosphoserine modification is found at Ser-556. Residues 559–684 are may mediate the interaction with FKBP15 and WASHC2; required for endosome to Golgi trafficking; the sequence is DRKEVVNIQT…IMKVLDALES (126 aa).

Directly interacts with GOLGA1 and GOLGA4. Interacts with FAM91A1, C17ORF75 and WDR11; the interaction recruits TBC1D23 to AP-1-derived vesicles. Directly interacts with WASHC1 and WASHC2A/FAM21A. Interacts with FKBP15.

The protein localises to the golgi apparatus. Its subcellular location is the trans-Golgi network. It is found in the cytoplasmic vesicle. Putative Rab GTPase-activating protein which plays a role in vesicular trafficking. Involved in endosome-to-Golgi trafficking. Acts as a bridging protein by binding simultaneously to golgins, including GOLGA1 and GOLGA4, located at the trans-Golgi, and to the WASH complex, located on endosome-derived vesicles. Together with WDR11 complex facilitates the golgin-mediated capture of vesicles generated using AP-1. Plays a role in brain development, including in cortical neuron positioning. May also be important for neurite outgrowth, possibly through its involvement in membrane trafficking and cargo delivery, 2 processes that are essential for axonal and dendritic growth. May act as a general inhibitor of innate immunity signaling, strongly inhibiting multiple TLR and dectin/CLEC7A-signaling pathways. Does not alter initial activation events, but instead affects maintenance of inflammatory gene expression several hours after bacterial lipopolysaccharide (LPS) challenge. The polypeptide is TBC1 domain family member 23 (TBC1D23) (Pongo abelii (Sumatran orangutan)).